The following is a 171-amino-acid chain: Tetratricopeptide repeat protein 9C (171 aa).

TPR repeat units follow at residues 8–41, 72–107, and 108–141; these read AQLY…LRGL, TDCY…QPEN, and AKAL…QPKD.

The protein belongs to the TTC9 family.

The polypeptide is Tetratricopeptide repeat protein 9C (Ttc9c) (Rattus norvegicus (Rat)).